The following is a 130-amino-acid chain: Protein ApaG (130 aa).

An ApaG domain is found at 3-127 (RAVTRNIEVQ…FSLDLPGTRR (125 aa)).

This chain is Protein ApaG, found in Mesorhizobium japonicum (strain LMG 29417 / CECT 9101 / MAFF 303099) (Mesorhizobium loti (strain MAFF 303099)).